We begin with the raw amino-acid sequence, 281 residues long: MSLGIVVNVSRQSAIDLARRLARWLDERKVDYVFESLSAEKTGSHRSAPIEELNTQCDAFISLGGDGTLLFTSQHSVTKPVIGVNVGRLGFLAEFSPEEMLPAVERFLNGDYSIHTRSQLEAGLLTNGSPEHFRALNDVVIEKGTYPRIPAFIIKLDGELLSSYRADGIIIATSTGSTAYSMSAGGPIIAPKSSVVVITPICPHMLTVRPIVISDEKSIEVSVDAPDGAFPLNCDGHLRKMLAPQEVVTIKKSSQSINLVANSSRDYCEVLRTKLLWGREA.

Asp66 serves as the catalytic Proton acceptor. NAD(+)-binding positions include 66–67 (DG), 137–138 (ND), Arg148, Arg165, Asp167, and 178–183 (TAYSMS).

It belongs to the NAD kinase family. A divalent metal cation serves as cofactor.

Its subcellular location is the cytoplasm. It carries out the reaction NAD(+) + ATP = ADP + NADP(+) + H(+). Its function is as follows. Involved in the regulation of the intracellular balance of NAD and NADP, and is a key enzyme in the biosynthesis of NADP. Catalyzes specifically the phosphorylation on 2'-hydroxyl of the adenosine moiety of NAD to yield NADP. In Chlorobium phaeovibrioides (strain DSM 265 / 1930) (Prosthecochloris vibrioformis (strain DSM 265)), this protein is NAD kinase.